The sequence spans 469 residues: UDP-N-acetylmuramate--L-alanine ligase (469 aa).

122-128 is an ATP binding site; the sequence is GTHGKTT.

Belongs to the MurCDEF family.

It is found in the cytoplasm. The catalysed reaction is UDP-N-acetyl-alpha-D-muramate + L-alanine + ATP = UDP-N-acetyl-alpha-D-muramoyl-L-alanine + ADP + phosphate + H(+). The protein operates within cell wall biogenesis; peptidoglycan biosynthesis. Its function is as follows. Cell wall formation. The sequence is that of UDP-N-acetylmuramate--L-alanine ligase from Legionella pneumophila subsp. pneumophila (strain Philadelphia 1 / ATCC 33152 / DSM 7513).